Consider the following 281-residue polypeptide: Phosphatidylglycerol--prolipoprotein diacylglyceryl transferase (281 aa).

4 helical membrane passes run 23 to 43 (IGPLAVHWYGLGYVVGILFAW), 71 to 91 (FVIWAALGVVLGGRIGYVLFY), 107 to 127 (WDGGMSFHGGILGTTLAMILF), and 133 to 153 (ILVWSMFDTIAAGVPIGLGVV). Residue arginine 154 participates in a 1,2-diacyl-sn-glycero-3-phospho-(1'-sn-glycerol) binding. Helical transmembrane passes span 189 to 209 (LYEAFLEGLVLFFVLFVLVWG), 217 to 237 (GFVAGAFVTGYGLSRIAVEFF), and 247 to 267 (LFGGWLTMGMVLSVPMVLLGL).

The protein belongs to the Lgt family.

It is found in the cell inner membrane. The enzyme catalyses L-cysteinyl-[prolipoprotein] + a 1,2-diacyl-sn-glycero-3-phospho-(1'-sn-glycerol) = an S-1,2-diacyl-sn-glyceryl-L-cysteinyl-[prolipoprotein] + sn-glycerol 1-phosphate + H(+). It functions in the pathway protein modification; lipoprotein biosynthesis (diacylglyceryl transfer). Functionally, catalyzes the transfer of the diacylglyceryl group from phosphatidylglycerol to the sulfhydryl group of the N-terminal cysteine of a prolipoprotein, the first step in the formation of mature lipoproteins. In Brucella canis (strain ATCC 23365 / NCTC 10854 / RM-666), this protein is Phosphatidylglycerol--prolipoprotein diacylglyceryl transferase.